A 430-amino-acid chain; its full sequence is Bifunctional protein GlmU (430 aa).

A pyrophosphorylase region spans residues 1–223 (MSFSVVILAA…KNEFQGVNSK (223 aa)). UDP-N-acetyl-alpha-D-glucosamine-binding positions include 8-11 (LAAG), Lys22, and 81-82 (GT). Asp102 is a Mg(2+) binding site. Residues Gly135, Glu149, Asn164, and Asn221 each coordinate UDP-N-acetyl-alpha-D-glucosamine. Position 221 (Asn221) interacts with Mg(2+). Residues 224-244 (YDLANAEIVMQDRIKRHWMQQ) form a linker region. An N-acetyltransferase region spans residues 245–430 (GVIMRLPQTI…DFYYKFFGKN (186 aa)). UDP-N-acetyl-alpha-D-glucosamine is bound by residues Arg308 and Lys325. His336 functions as the Proton acceptor in the catalytic mechanism. UDP-N-acetyl-alpha-D-glucosamine is bound by residues Tyr339 and Asn350. Residues Ala353, 359-360 (NY), Ser378, Ala396, and Arg413 each bind acetyl-CoA.

In the N-terminal section; belongs to the N-acetylglucosamine-1-phosphate uridyltransferase family. The protein in the C-terminal section; belongs to the transferase hexapeptide repeat family. As to quaternary structure, homotrimer. The cofactor is Mg(2+).

Its subcellular location is the cytoplasm. The enzyme catalyses alpha-D-glucosamine 1-phosphate + acetyl-CoA = N-acetyl-alpha-D-glucosamine 1-phosphate + CoA + H(+). It catalyses the reaction N-acetyl-alpha-D-glucosamine 1-phosphate + UTP + H(+) = UDP-N-acetyl-alpha-D-glucosamine + diphosphate. It functions in the pathway nucleotide-sugar biosynthesis; UDP-N-acetyl-alpha-D-glucosamine biosynthesis; N-acetyl-alpha-D-glucosamine 1-phosphate from alpha-D-glucosamine 6-phosphate (route II): step 2/2. It participates in nucleotide-sugar biosynthesis; UDP-N-acetyl-alpha-D-glucosamine biosynthesis; UDP-N-acetyl-alpha-D-glucosamine from N-acetyl-alpha-D-glucosamine 1-phosphate: step 1/1. Its pathway is bacterial outer membrane biogenesis; LPS lipid A biosynthesis. Its function is as follows. Catalyzes the last two sequential reactions in the de novo biosynthetic pathway for UDP-N-acetylglucosamine (UDP-GlcNAc). The C-terminal domain catalyzes the transfer of acetyl group from acetyl coenzyme A to glucosamine-1-phosphate (GlcN-1-P) to produce N-acetylglucosamine-1-phosphate (GlcNAc-1-P), which is converted into UDP-GlcNAc by the transfer of uridine 5-monophosphate (from uridine 5-triphosphate), a reaction catalyzed by the N-terminal domain. In Nitratiruptor sp. (strain SB155-2), this protein is Bifunctional protein GlmU.